The primary structure comprises 320 residues: Ferrochelatase (320 aa).

Fe cation-binding residues include His194 and Glu275.

It belongs to the ferrochelatase family. Monomer.

The protein resides in the cytoplasm. The catalysed reaction is heme b + 2 H(+) = protoporphyrin IX + Fe(2+). It participates in porphyrin-containing compound metabolism; protoheme biosynthesis; protoheme from protoporphyrin-IX: step 1/1. In terms of biological role, catalyzes the ferrous insertion into protoporphyrin IX. This is Ferrochelatase from Salmonella schwarzengrund (strain CVM19633).